The sequence spans 308 residues: Phenylcoumaran benzylic ether reductase 1 (308 aa).

Residues glycine 11–glycine 17, arginine 36, and arginine 45 each bind NADP(+). The active-site Proton acceptor is lysine 133. Arginine 137 contributes to the NADP(+) binding site.

The protein belongs to the NmrA-type oxidoreductase family. Isoflavone reductase subfamily. In terms of tissue distribution, expressed in apical meristem and cotyledon veins of young seedlings. Expressed in vascular tissues of roots, leaves, stems and petals. Expressed in pollen grains. Expressed at low levels in cauline leaves and siliques.

The catalysed reaction is (-)-dehydrodiconiferyl alcohol + NADPH + H(+) = (S)-isodihydrodehydrodiconiferyl alcohol + NADP(+). It catalyses the reaction (+)-dehydrodiconiferyl alcohol + NADPH + H(+) = (R)-isodihydrodehydrodiconiferyl alcohol + NADP(+). The enzyme catalyses (2R,3S)-dihydrodehydrodiconiferyl alcohol + NADPH + H(+) = (S)-tetrahydrodehydrodiconiferyl alcohol + NADP(+). It carries out the reaction (2S,3R)-dihydrodehydrodiconiferyl alcohol + NADPH + H(+) = (R)-tetrahydrodehydrodiconiferyl alcohol + NADP(+). Oxidoreductase involved in lignan biosynthesis. Catalyzes the NADPH-dependent reduction of phenylcoumaran benzylic ethers. Converts dehydrodiconiferyl alcohol (DDC) to isodihydrodehydrodiconiferyl alcohol (IDDDC), and dihydrodehydrodiconiferyl alcohol (DDDC) to tetrahydrodehydrodiconiferyl alcohol (TDDC). Plays an important role in the biosynthesis of secondary metabolites. In addition to the 8-5'-linked neolignan DDC, can reduce the 8-8'-linked lignans, pinoresinol, and lariciresinol, but with lower activities. The polypeptide is Phenylcoumaran benzylic ether reductase 1 (Arabidopsis thaliana (Mouse-ear cress)).